A 703-amino-acid chain; its full sequence is Arf-GAP with GTPase, ANK repeat and PH domain-containing protein 9 (703 aa).

Disordered stretches follow at residues 249 to 287, 299 to 323, and 427 to 449; these read KRNGGGSLNNYSSSIPPTPSTSQEDPQFSVPPTANTPTP, FTSEKGSDPDKERKAPENHADTIGS, and SSTTSPKLNPPPSPHANKKKHLK. Over residues 271–286 the composition is skewed to polar residues; sequence QEDPQFSVPPTANTPT. Positions 303-318 are enriched in basic and acidic residues; that stretch reads KGSDPDKERKAPENHA. The 162-residue stretch at 327–488 folds into the PH domain; sequence IPIKQGMLLK…WVQAIQSQIL (162 aa). Residues 509-629 enclose the Arf-GAP domain; sequence AMALQSIQNM…LFLAPLPCTE (121 aa). Residues 524–547 form a C4-type zinc finger; it reads CVDCETQNPKWASLNLGVLMCIEC. The stretch at 631-700 is one ANK repeat; the sequence is SLGQQLLRAT…WTSWPEMPTG (70 aa).

This sequence belongs to the centaurin gamma-like family.

Functionally, putative GTPase-activating protein. The polypeptide is Arf-GAP with GTPase, ANK repeat and PH domain-containing protein 9 (AGAP9) (Homo sapiens (Human)).